The primary structure comprises 2135 residues: Protein SUBSTANDARD STARCH GRAIN 4, chloroplastic (2135 aa).

Low complexity-rich tracts occupy residues 1–10 (MSHCLRASPF) and 72–84 (QHQPLLPTRRQQQ). Residues 1-42 (MSHCLRASPFLSPPPPLLHPSRRRRHRQGGCIHTSPGTRPLV) constitute a chloroplast transit peptide. 2 disordered regions span residues 1–44 (MSHC…LVAR) and 58–89 (SDSSDCPAPHHPHSQHQPLLPTRRQQQQPPPP). Residues 43–104 (ARARFDPPPL…ASLAPLWREG (62 aa)) are Stromal-facing. The helical transmembrane segment at 105–125 (LFLVRCSVFAAALSVAAALSW) threads the bilayer. Residues 126-2135 (YAQLRARSFV…LFEYSATSQG (2010 aa)) are Chloroplast intermembrane-facing. The span at 361-370 (RRRYRRKAHS) shows a compositional bias: basic residues. 3 disordered regions span residues 361 to 382 (RRRYRRKAHSKLISDTDNSSQQ), 401 to 492 (SGNP…QVSE), and 1843 to 1869 (FLGSLSTSPDGQQSETERTPEHGSFKP). 3 stretches are compositionally biased toward polar residues: residues 373–382 (ISDTDNSSQQ), 454–490 (NFASTMLIGNTDVLNGSSHNQQPSQISSHSWENNEQV), and 1846–1856 (SLSTSPDGQQS). The segment covering 1857-1866 (ETERTPEHGS) has biased composition (basic and acidic residues).

This sequence belongs to the TamB family. In terms of assembly, part of the TIC complex, which can interact with components of the TOC complex to form a larger import complex. As to expression, highly expressed in third leaf and developing seeds. Expressed in anthers, pistils, flag leaves and young panicles.

The protein resides in the plastid. It is found in the chloroplast inner membrane. Its subcellular location is the chloroplast intermembrane space. The protein localises to the chloroplast. It localises to the amyloplast. Its function is as follows. Part of the inner chloroplast membrane translocon complex (TIC) which associates with the outer chloroplast membrane translocon complex (TOC) and forms a supercomplex involved in protein precursor import into the chloroplast stroma. Required for the regulation of starch granule size in amyloplasts. The polypeptide is Protein SUBSTANDARD STARCH GRAIN 4, chloroplastic (Oryza sativa subsp. japonica (Rice)).